The sequence spans 506 residues: Cobyric acid synthase (506 aa).

The GATase cobBQ-type domain maps to 251–448 (DITIAIVQLP…LHGLFDSDAF (198 aa)). Cys-332 acts as the Nucleophile in catalysis. The active site involves His-440.

It belongs to the CobB/CobQ family. CobQ subfamily.

It participates in cofactor biosynthesis; adenosylcobalamin biosynthesis. Catalyzes amidations at positions B, D, E, and G on adenosylcobyrinic A,C-diamide. NH(2) groups are provided by glutamine, and one molecule of ATP is hydrogenolyzed for each amidation. In Salmonella arizonae (strain ATCC BAA-731 / CDC346-86 / RSK2980), this protein is Cobyric acid synthase.